Consider the following 1857-residue polypeptide: Ankyrin repeat domain-containing protein 31 (1857 aa).

2 disordered regions span residues 1 to 30 (MENG…EDEE) and 195 to 215 (SEPG…DEES). Residues 195–207 (SEPGEEVTQTMTS) are compositionally biased toward polar residues. 3 ANK repeats span residues 475–504 (FGEN…NVNQ), 508–537 (DGWT…DVNV), and 541–570 (YQIT…DPLF). The span at 676–691 (KFGKSNLNSVKNSRTN) shows a compositional bias: polar residues. Disordered regions lie at residues 676-711 (KFGK…VDDR), 813-844 (VTTH…KGKA), 995-1038 (RDSS…TVVH), 1046-1065 (KAEK…NTDF), and 1075-1137 (ANSS…QNFR). Positions 692-704 (VSKRKGQKNRQQK) are enriched in basic residues. A compositionally biased stretch (polar residues) spans 814–839 (TTHQQPHTNQEQYSSPYKSLGNNSSN). Over residues 1008–1019 (SLERKQDTDKNY) the composition is skewed to basic and acidic residues. Polar residues predominate over residues 1023–1032 (GPNTSSSSRP). A compositionally biased stretch (basic and acidic residues) spans 1082–1136 (QRKEKENVRKSDAELTHNDSEAERTLKSCEEKKKNMDSETHSPCDIQEHRKDQNF). ANK repeat units follow at residues 1162-1191 (KGES…DVNL), 1195-1224 (AGWT…NVNC), and 1228-1257 (DGIV…NPNQ). Disordered stretches follow at residues 1457 to 1479 (NSDI…AHAQ), 1540 to 1570 (GGLL…AENS), 1609 to 1640 (DPHS…AEPL), and 1663 to 1697 (AAAA…TTPR). Over residues 1555-1570 (ASSSQPAALTPHAENS) the composition is skewed to polar residues. A compositionally biased stretch (low complexity) spans 1663-1683 (AAAASHTDSTQSSLSSASAHQ). The 96-residue stretch at 1687–1782 (KTVPHRNTTP…TYLGRELVKC (96 aa)) folds into the RAMA domain.

In terms of assembly, interacts with REC114; the interaction is direct. Interacts with IHO1. As to expression, present in meiotic cells (at protein level).

It localises to the nucleus. The protein localises to the chromosome. Its function is as follows. Required for DNA double-strand breaks (DSBs) formation during meiotic recombination. Regulates the spatial and temporal patterns of pre-DSB recombinosome assembly and recombination activity by acting as a scaffold that anchors REC114 and other factors to specific genomic locations, thereby regulating DSB formation. Plays a key role in recombination in the pseudoautosomal regions of sex chromosomes. This chain is Ankyrin repeat domain-containing protein 31, found in Mus musculus (Mouse).